The primary structure comprises 195 residues: Protein GrpE (195 aa).

Belongs to the GrpE family. In terms of assembly, homodimer.

Its subcellular location is the cytoplasm. Functionally, participates actively in the response to hyperosmotic and heat shock by preventing the aggregation of stress-denatured proteins, in association with DnaK and GrpE. It is the nucleotide exchange factor for DnaK and may function as a thermosensor. Unfolded proteins bind initially to DnaJ; upon interaction with the DnaJ-bound protein, DnaK hydrolyzes its bound ATP, resulting in the formation of a stable complex. GrpE releases ADP from DnaK; ATP binding to DnaK triggers the release of the substrate protein, thus completing the reaction cycle. Several rounds of ATP-dependent interactions between DnaJ, DnaK and GrpE are required for fully efficient folding. This chain is Protein GrpE, found in Francisella tularensis subsp. mediasiatica (strain FSC147).